Reading from the N-terminus, the 533-residue chain is Amidophosphoribosyltransferase (533 aa).

Cys-2 functions as the Nucleophile in the catalytic mechanism. The Glutamine amidotransferase type-2 domain maps to 2 to 238 (CGILALMLAD…PGECVFIRRS (237 aa)). The Mg(2+) site is built by Asp-383 and Asp-384. Ser-506 is modified (phosphoserine).

The protein in the C-terminal section; belongs to the purine/pyrimidine phosphoribosyltransferase family. The cofactor is Mg(2+).

It carries out the reaction 5-phospho-beta-D-ribosylamine + L-glutamate + diphosphate = 5-phospho-alpha-D-ribose 1-diphosphate + L-glutamine + H2O. Its pathway is purine metabolism; IMP biosynthesis via de novo pathway; N(1)-(5-phospho-D-ribosyl)glycinamide from 5-phospho-alpha-D-ribose 1-diphosphate: step 1/2. The chain is Amidophosphoribosyltransferase (ade4) from Schizosaccharomyces pombe (strain 972 / ATCC 24843) (Fission yeast).